The primary structure comprises 462 residues: Tubby-like F-box protein 7 (462 aa).

Residues 54 to 109 (SKWAGLPPELLRDVMKRLEEDDSNWPSRKDVVACASVCTTWRDMCKDIVRNPEFCG) form the F-box domain. Disordered regions lie at residues 317-338 (FSEF…DDVN) and 383-418 (QPSS…SSSN). The segment covering 383-417 (QPSSGAASEPSQAGQAAQQQTQPSQPSSSSSSSSS) has biased composition (low complexity).

The protein belongs to the TUB family. As to expression, ubiquitous.

This is Tubby-like F-box protein 7 (TULP7) from Oryza sativa subsp. japonica (Rice).